The chain runs to 429 residues: Ribosomal RNA small subunit methyltransferase B (429 aa).

Residues 254–260, D277, D303, and D322 contribute to the S-adenosyl-L-methionine site; that span reads CAAPGGK. The active-site Nucleophile is C375.

The protein belongs to the class I-like SAM-binding methyltransferase superfamily. RsmB/NOP family.

It is found in the cytoplasm. It catalyses the reaction cytidine(967) in 16S rRNA + S-adenosyl-L-methionine = 5-methylcytidine(967) in 16S rRNA + S-adenosyl-L-homocysteine + H(+). Functionally, specifically methylates the cytosine at position 967 (m5C967) of 16S rRNA. This Pectobacterium atrosepticum (strain SCRI 1043 / ATCC BAA-672) (Erwinia carotovora subsp. atroseptica) protein is Ribosomal RNA small subunit methyltransferase B.